We begin with the raw amino-acid sequence, 378 residues long: DNA replication and repair protein RecF (378 aa).

An ATP-binding site is contributed by 30–37 (GRNGQGKT).

Belongs to the RecF family.

The protein localises to the cytoplasm. In terms of biological role, the RecF protein is involved in DNA metabolism; it is required for DNA replication and normal SOS inducibility. RecF binds preferentially to single-stranded, linear DNA. It also seems to bind ATP. This Frankia alni (strain DSM 45986 / CECT 9034 / ACN14a) protein is DNA replication and repair protein RecF.